The primary structure comprises 404 residues: Cysteine desulfurase IscS (404 aa).

Residues 75 to 76, asparagine 155, glutamine 183, and 203 to 205 each bind pyridoxal 5'-phosphate; these read AT and SAH. N6-(pyridoxal phosphate)lysine is present on lysine 206. Threonine 243 serves as a coordination point for pyridoxal 5'-phosphate. Cysteine 328 functions as the Cysteine persulfide intermediate in the catalytic mechanism. Cysteine 328 provides a ligand contact to [2Fe-2S] cluster.

Belongs to the class-V pyridoxal-phosphate-dependent aminotransferase family. NifS/IscS subfamily. Homodimer. Forms a heterotetramer with IscU, interacts with other sulfur acceptors. It depends on pyridoxal 5'-phosphate as a cofactor.

It is found in the cytoplasm. The enzyme catalyses (sulfur carrier)-H + L-cysteine = (sulfur carrier)-SH + L-alanine. The protein operates within cofactor biosynthesis; iron-sulfur cluster biosynthesis. In terms of biological role, master enzyme that delivers sulfur to a number of partners involved in Fe-S cluster assembly, tRNA modification or cofactor biosynthesis. Catalyzes the removal of elemental sulfur atoms from cysteine to produce alanine. Functions as a sulfur delivery protein for Fe-S cluster synthesis onto IscU, an Fe-S scaffold assembly protein, as well as other S acceptor proteins. The sequence is that of Cysteine desulfurase IscS from Ectopseudomonas mendocina (strain ymp) (Pseudomonas mendocina).